A 78-amino-acid polypeptide reads, in one-letter code: MKTLLLTFLVVTIVCLDLGYTLICHQLHGLQTCEPAQKFCQKRTTMFFPNHPVLLMGCTYNCPTERYSVCCSTDKCNK.

The N-terminal stretch at 1 to 21 (MKTLLLTFLVVTIVCLDLGYT) is a signal peptide. Intrachain disulfides connect cysteine 24–cysteine 40, cysteine 33–cysteine 58, cysteine 62–cysteine 70, and cysteine 71–cysteine 76.

This sequence belongs to the three-finger toxin family. Short-chain subfamily. As to expression, expressed by the venom gland.

The protein resides in the secreted. Its function is as follows. This three-finger toxin binds and inhibits the nicotinic acetylcholine receptor (nAChR). The polypeptide is Short neurotoxin SNTX14 (Ophiophagus hannah (King cobra)).